A 572-amino-acid polypeptide reads, in one-letter code: Probable cysteine--tRNA ligase, mitochondrial (572 aa).

Cysteine 81 contributes to the Zn(2+) binding site. Glycine 82 provides a ligand contact to L-cysteine. Positions 83–93 match the 'HIGH' region motif; it reads PTVYDHAHLGH. L-cysteine is bound at residue threonine 122. The 'KIIK' region motif lies at 127-130; the sequence is KIIK. Zn(2+) contacts are provided by cysteine 260, histidine 285, and glutamate 289. Histidine 285 is a binding site for L-cysteine. The 'KMSKS' region signature appears at 320-324; the sequence is KMSKS. Lysine 323 is an ATP binding site.

This sequence belongs to the class-I aminoacyl-tRNA synthetase family. Requires Zn(2+) as cofactor.

The protein localises to the mitochondrion. The catalysed reaction is tRNA(Cys) + L-cysteine + ATP = L-cysteinyl-tRNA(Cys) + AMP + diphosphate. The enzyme catalyses 2 L-cysteine = S-sulfanyl-L-cysteine + L-alanine. It carries out the reaction S-sulfanyl-L-cysteine + L-cysteine = S-disulfanyl-L-cysteine + L-alanine. It catalyses the reaction S-sulfanyl-L-cysteine + tRNA(Cys) + ATP = (S)-sulfanyl-L-cysteinyl-tRNA(Cys) + AMP + diphosphate. The catalysed reaction is S-disulfanyl-L-cysteine + tRNA(Cys) + ATP = (S)-disulfanyl-L-cysteinyl-tRNA(Cys) + AMP + diphosphate. In terms of biological role, mitochondrial cysteine-specific aminoacyl-tRNA synthetase that catalyzes the ATP-dependent ligation of cysteine to tRNA(Cys). In addition to its role as an aminoacyl-tRNA synthetase, has also cysteine persulfide synthase activity. Produces reactive persulfide species such as cysteine persulfide (CysSSH) from substrate cysteine and mediate direct incorporation of CysSSH into proteins during translations, resulting in protein persulfides and polysulfides. CysSSHs behave as potent antioxidants and cellular protectants. This is Probable cysteine--tRNA ligase, mitochondrial (cars2) from Xenopus tropicalis (Western clawed frog).